The sequence spans 229 residues: DNA mismatch repair protein MutH (229 aa).

Belongs to the MutH family.

Its subcellular location is the cytoplasm. Sequence-specific endonuclease that cleaves unmethylated GATC sequences. It is involved in DNA mismatch repair. The protein is DNA mismatch repair protein MutH of Escherichia coli O45:K1 (strain S88 / ExPEC).